The chain runs to 762 residues: Palmitoyltransferase ZDHHC8 (762 aa).

The Cytoplasmic segment spans residues 1–13; that stretch reads MPRSPGTRLKPAK. Residues 14-34 form a helical membrane-spanning segment; the sequence is YIPVATAAALLVGSSTLFFVF. Over 35–52 the chain is Lumenal; it reads TCPWLTRAVSPAIPVYNG. The chain crosses the membrane as a helical span at residues 53-73; it reads ILFLFVLANFSMATFMDPGVF. Residues 74–148 are Cytoplasmic-facing; that stretch reads PRADEDEDKE…NCIGRRNYRY (75 aa). A DHHC domain is found at 104–154; it reads KWCATCHFYRPPRCSHCSVCDNCVEDFDHHCPWVNNCIGRRNYRYFFLFLL. Catalysis depends on cysteine 134, which acts as the S-palmitoyl cysteine intermediate. A helical transmembrane segment spans residues 149 to 169; it reads FFLFLLSLSAHMVGVVAFGLL. At 170 to 190 the chain is on the lumenal side; the sequence is YVLNHSEGLGAAHTTITMAVM. A helical transmembrane segment spans residues 191–211; that stretch reads CVAGLFFIPVIGLTGFHVVLV. Residues 212-762 lie on the Cytoplasmic side of the membrane; the sequence is TRGRTTNEQV…VGGTTYEISV (551 aa). Disordered stretches follow at residues 289-350, 362-423, 436-537, and 551-574; these read GLKA…PPTP, GPKT…TTDA, ASRR…SPVR, and ERKDREERERLLRSQTDSLFGDSG. Serine 335 is subject to Phosphoserine. Positions 408 to 417 are enriched in pro residues; sequence LRPPYPPSPP. Arginine 439 is subject to Omega-N-methylarginine. The span at 471 to 485 shows a compositional bias: polar residues; the sequence is RNGSLSYDSLLNPGS. The span at 511–521 shows a compositional bias: pro residues; the sequence is PSDPPRPPPRS. A compositionally biased stretch (basic and acidic residues) spans 551–562; the sequence is ERKDREERERLL. Residues serine 603 and serine 624 each carry the phosphoserine modification. Residues 626 to 644 are compositionally biased toward low complexity; it reads SSLSSSMSRAPRTSSSSLQ. Disordered stretches follow at residues 626-684 and 707-744; these read SSLS…SYTG and DHPQLKTPPSKLNGQSPGMARLGPAASPMGPNASPARH. Serine 672, serine 679, serine 722, and serine 740 each carry phosphoserine.

It belongs to the DHHC palmitoyltransferase family. ERF2/ZDHHC9 subfamily. Expressed in brain cortex and hippocampus.

The protein resides in the golgi apparatus membrane. The protein localises to the mitochondrion membrane. The catalysed reaction is L-cysteinyl-[protein] + hexadecanoyl-CoA = S-hexadecanoyl-L-cysteinyl-[protein] + CoA. Functionally, palmitoyltransferase that catalyzes the addition of palmitate onto various protein substrates and therefore functions in several unrelated biological processes. Through the palmitoylation of ABCA1 regulates the localization of the transporter to the plasma membrane and thereby regulates its function in cholesterol and phospholipid efflux. Could also pamitoylate the D(2) dopamine receptor DRD2 and regulate its stability and localization to the plasma membrane. Could also play a role in glutamatergic transmission. The polypeptide is Palmitoyltransferase ZDHHC8 (Mus musculus (Mouse)).